An 878-amino-acid chain; its full sequence is Phosphoenolpyruvate carboxylase (878 aa).

Residues H140 and K545 contribute to the active site.

The protein belongs to the PEPCase type 1 family. Requires Mg(2+) as cofactor.

The enzyme catalyses oxaloacetate + phosphate = phosphoenolpyruvate + hydrogencarbonate. Functionally, forms oxaloacetate, a four-carbon dicarboxylic acid source for the tricarboxylic acid cycle. This chain is Phosphoenolpyruvate carboxylase, found in Pseudomonas aeruginosa (strain ATCC 15692 / DSM 22644 / CIP 104116 / JCM 14847 / LMG 12228 / 1C / PRS 101 / PAO1).